We begin with the raw amino-acid sequence, 874 residues long: Coatomer subunit gamma-1 (874 aa).

A compositionally biased stretch (basic and acidic residues) spans M1–E11. The disordered stretch occupies residues M1 to H21. HEAT repeat units follow at residues T64–D101, K283–S320, V322–S355, and S356–R392. At T594 the chain carries Phosphothreonine. An interaction with ZNF289/ARFGAP2 region spans residues R609–G874.

It belongs to the COPG family. In terms of assembly, oligomeric complex that consists of at least the alpha, beta, beta', gamma, delta, epsilon and zeta subunits. Interacts with ZNF289/ARFGAP2 through its C-terminal appendage domain. Interacts with EGFR upon EGF treatment; interaction is essential for regulation of EGF-dependent nuclear transport of EGFR by retrograde trafficking from the Golgi to the ER. The coatomer interacts with KDEL receptors; the interaction is important for retrograde trafficking of KDEL-bearing proteins from the Golgi to the endoplasmic reticulum. Interacts with COPB1. Interacts with TMED10 (via C-terminus). Interacts with TMED2, TMED3, TMED7 and TMED9.

The protein resides in the cytoplasm. The protein localises to the cytosol. Its subcellular location is the golgi apparatus membrane. It is found in the cytoplasmic vesicle. It localises to the COPI-coated vesicle membrane. The coatomer is a cytosolic protein complex that binds to dilysine motifs and reversibly associates with Golgi non-clathrin-coated vesicles, which further mediate biosynthetic protein transport from the ER, via the Golgi up to the trans Golgi network. Coatomer complex is required for budding from Golgi membranes, and is essential for the retrograde Golgi-to-ER transport of dilysine-tagged proteins. In mammals, the coatomer can only be recruited by membranes associated to ADP-ribosylation factors (ARFs), which are small GTP-binding proteins; the complex also influences the Golgi structural integrity, as well as the processing, activity, and endocytic recycling of LDL receptors. Required for limiting lipid storage in lipid droplets. Involved in lipid homeostasis by regulating the presence of perilipin family members PLIN2 and PLIN3 at the lipid droplet surface and promoting the association of adipocyte triglyceride lipase (PNPLA2) with the lipid droplet surface to mediate lipolysis. The chain is Coatomer subunit gamma-1 (Copg1) from Rattus norvegicus (Rat).